Consider the following 403-residue polypeptide: S-adenosylmethionine synthase (403 aa).

H17 is an ATP binding site. D19 is a binding site for Mg(2+). E45 provides a ligand contact to K(+). L-methionine-binding residues include E58 and Q104. The tract at residues 104–114 (QSPDIAQGVDT) is flexible loop. ATP-binding positions include 179 to 181 (DGK), 250 to 251 (KF), D259, 265 to 266 (RK), A282, and K286. D259 contacts L-methionine. Residue K290 coordinates L-methionine.

It belongs to the AdoMet synthase family. As to quaternary structure, homotetramer; dimer of dimers. Requires Mg(2+) as cofactor. It depends on K(+) as a cofactor.

The protein resides in the cytoplasm. It catalyses the reaction L-methionine + ATP + H2O = S-adenosyl-L-methionine + phosphate + diphosphate. It functions in the pathway amino-acid biosynthesis; S-adenosyl-L-methionine biosynthesis; S-adenosyl-L-methionine from L-methionine: step 1/1. Catalyzes the formation of S-adenosylmethionine (AdoMet) from methionine and ATP. The overall synthetic reaction is composed of two sequential steps, AdoMet formation and the subsequent tripolyphosphate hydrolysis which occurs prior to release of AdoMet from the enzyme. This chain is S-adenosylmethionine synthase, found in Mycobacterium avium (strain 104).